Consider the following 828-residue polypeptide: DNA gyrase subunit A (828 aa).

The Topo IIA-type catalytic domain maps to 32-497; it reads LPDVRDGLKP…EVLSLEDEDL (466 aa). Catalysis depends on tyrosine 120, which acts as the O-(5'-phospho-DNA)-tyrosine intermediate. A GyrA-box motif is present at residues 524 to 530; it reads QKRGGRG.

The protein belongs to the type II topoisomerase GyrA/ParC subunit family. Heterotetramer, composed of two GyrA and two GyrB chains. In the heterotetramer, GyrA contains the active site tyrosine that forms a transient covalent intermediate with DNA, while GyrB binds cofactors and catalyzes ATP hydrolysis.

It localises to the cytoplasm. The enzyme catalyses ATP-dependent breakage, passage and rejoining of double-stranded DNA.. In terms of biological role, a type II topoisomerase that negatively supercoils closed circular double-stranded (ds) DNA in an ATP-dependent manner to modulate DNA topology and maintain chromosomes in an underwound state. Negative supercoiling favors strand separation, and DNA replication, transcription, recombination and repair, all of which involve strand separation. Also able to catalyze the interconversion of other topological isomers of dsDNA rings, including catenanes and knotted rings. Type II topoisomerases break and join 2 DNA strands simultaneously in an ATP-dependent manner. The protein is DNA gyrase subunit A of Streptococcus pyogenes serotype M18 (strain MGAS8232).